The sequence spans 894 residues: Protein SEY1 (894 aa).

The interval 1 to 64 (MGLDVDSVPI…PRALEPAQVT (64 aa)) is disordered. Residues 1–768 (MGLDVDSVPI…KRGTVSSMSQ (768 aa)) lie on the Cytoplasmic side of the membrane. Residues 9–24 (PIAEAAAPSSMAATEP) show a composition bias toward low complexity. A compositionally biased stretch (polar residues) spans 40 to 53 (APMNTDSSRETMPT). The GB1/RHD3-type G domain maps to 137-359 (GFGYDICAVL…DESYVFKTEY (223 aa)). GTP is bound at residue 147–154 (GSQSTGKS). Residues 536–559 (KVDDERAQLLDELHTLARTLRANE) are a coiled coil. The chain crosses the membrane as a helical span at residues 769–789 (VPIWMYGVLVVLGWNEAMAVL). Over 790–792 (RNP) the chain is Lumenal. The helical transmembrane segment at 793 to 813 (VYFTLLCMVLATAYVIWRLNL) threads the bilayer. The Cytoplasmic portion of the chain corresponds to 814 to 894 (GTPVLALASG…DSHPRLPASF (81 aa)). The segment at 841–894 (DGTPPSANRAREYRVPSGSTAHVSEKTPHRPLTTSGAAEADTVEDSHPRLPASF) is disordered.

This sequence belongs to the TRAFAC class dynamin-like GTPase superfamily. GB1/RHD3 GTPase family. RHD3 subfamily.

The protein resides in the endoplasmic reticulum membrane. Its function is as follows. Cooperates with the reticulon proteins and tubule-shaping DP1 family proteins to generate and maintain the structure of the tubular endoplasmic reticulum network. Has GTPase activity, which is required for its function in ER organization. This Malassezia globosa (strain ATCC MYA-4612 / CBS 7966) (Dandruff-associated fungus) protein is Protein SEY1.